The sequence spans 172 residues: Phosphopantetheine adenylyltransferase (172 aa).

Residue threonine 13 coordinates substrate. ATP contacts are provided by residues 13 to 14 (TF) and histidine 21. 3 residues coordinate substrate: lysine 45, leucine 81, and arginine 95. ATP contacts are provided by residues 96–98 (GLR), glutamate 106, and 131–137 (SQFISSR).

This sequence belongs to the bacterial CoaD family. In terms of assembly, homohexamer. Mg(2+) is required as a cofactor.

It localises to the cytoplasm. It carries out the reaction (R)-4'-phosphopantetheine + ATP + H(+) = 3'-dephospho-CoA + diphosphate. It participates in cofactor biosynthesis; coenzyme A biosynthesis; CoA from (R)-pantothenate: step 4/5. Its function is as follows. Reversibly transfers an adenylyl group from ATP to 4'-phosphopantetheine, yielding dephospho-CoA (dPCoA) and pyrophosphate. This chain is Phosphopantetheine adenylyltransferase, found in Rhodospirillum rubrum (strain ATCC 11170 / ATH 1.1.1 / DSM 467 / LMG 4362 / NCIMB 8255 / S1).